Here is a 386-residue protein sequence, read N- to C-terminus: Succinate--CoA ligase [ADP-forming] subunit beta (386 aa).

The ATP site is built by lysine 46, glutamate 99, alanine 102, and glutamate 107. Positions 199 and 213 each coordinate Mg(2+). Substrate is bound by residues asparagine 264 and 321-323; that span reads GIM.

The protein belongs to the succinate/malate CoA ligase beta subunit family. In terms of assembly, heterotetramer of two alpha and two beta subunits. Mg(2+) is required as a cofactor.

The catalysed reaction is succinate + ATP + CoA = succinyl-CoA + ADP + phosphate. It carries out the reaction GTP + succinate + CoA = succinyl-CoA + GDP + phosphate. Its pathway is carbohydrate metabolism; tricarboxylic acid cycle; succinate from succinyl-CoA (ligase route): step 1/1. Succinyl-CoA synthetase functions in the citric acid cycle (TCA), coupling the hydrolysis of succinyl-CoA to the synthesis of either ATP or GTP and thus represents the only step of substrate-level phosphorylation in the TCA. The beta subunit provides nucleotide specificity of the enzyme and binds the substrate succinate, while the binding sites for coenzyme A and phosphate are found in the alpha subunit. The protein is Succinate--CoA ligase [ADP-forming] subunit beta of Orientia tsutsugamushi (strain Ikeda) (Rickettsia tsutsugamushi).